We begin with the raw amino-acid sequence, 141 residues long: Large ribosomal subunit protein uL16 (141 aa).

Positions 1–21 (MLMPKRVKYRKQQRGHNRGMA) are disordered.

It belongs to the universal ribosomal protein uL16 family. In terms of assembly, part of the 50S ribosomal subunit.

Its function is as follows. Binds 23S rRNA and is also seen to make contacts with the A and possibly P site tRNAs. The chain is Large ribosomal subunit protein uL16 from Roseiflexus sp. (strain RS-1).